Reading from the N-terminus, the 84-residue chain is Esculentin-1SIa (84 aa).

The signal sequence occupies residues 1-22 (MFTLKKPLLLIVLLGIISLSLC). The propeptide at 23–36 (EQERAADEDEGSEI) is removed in mature form. A disulfide bond links C78 and C84.

As to expression, expressed by the skin glands.

Its subcellular location is the secreted. Its function is as follows. Has antimicrobial activity against Gram-negative bacterium E.coli ATCC 8739 (MIC=6.3 ug), against Gram positive bacteria S.aureus ATCC 6538 (MIC=3.1 ug), methicillin-resistant S.aureus ATCC 43300 (MIC=25 ug) and B.subtilis ATCC 6633 (MIC=25 ug). Has no activity against fungus C.albicans ATCC 90028. The sequence is that of Esculentin-1SIa from Odorrana ishikawae (Ishikawa's frog).